An 810-amino-acid chain; its full sequence is Probable inorganic carbon transporter subunit DabA (810 aa).

C347, D349, H509, and C524 together coordinate Zn(2+).

It belongs to the inorganic carbon transporter (TC 9.A.2) DabA family. Forms a complex with DabB. Zn(2+) is required as a cofactor.

The protein localises to the cell inner membrane. Part of an energy-coupled inorganic carbon pump. In Marinomonas sp. (strain MWYL1), this protein is Probable inorganic carbon transporter subunit DabA.